The following is a 292-amino-acid chain: Ventral anterior homeobox 2 (292 aa).

The segment covering 1–36 (MGDGGAERDRGPKRREEPGGRSGCRGEHRGAEDLRA) has biased composition (basic and acidic residues). The disordered stretch occupies residues 1–74 (MGDGGAERDR…DGQQALGETD (74 aa)). The segment covering 38–55 (TGSTSPREIAGTSASSPA) has biased composition (polar residues). The segment at residues 102-161 (PKRTRTSFTAEQLYRLEMEFQRCQYVVGRERTELARQLNLSETQVKVWFQNRRTKQKKDQ) is a DNA-binding region (homeobox). The segment at 212-241 (AGHRGTSLGDPRNSSQRLNPMPSASASSPL) is disordered.

This sequence belongs to the EMX homeobox family.

It is found in the nucleus. Functionally, transcription factor that may function in dorsoventral specification of the forebrain. Regulates the expression of Wnt signaling antagonists including the expression of a truncated TCF7L2 isoform that cannot bind CTNNB1 and acts therefore as a potent dominant-negative Wnt antagonist. Plays a crucial role in eye development and, in particular, in the specification of the ventral optic vesicle. May be a regulator of axial polarization in the retina. This Rattus norvegicus (Rat) protein is Ventral anterior homeobox 2 (Vax2).